The primary structure comprises 30 residues: Cyclotide cter-G (30 aa).

A cross-link (cyclopeptide (Gly-Asn)) is located at residues 1-30 (GLPCGESCVFIPCITTVVGCSCKNKVCYNN). Cystine bridges form between Cys4-Cys20, Cys8-Cys22, and Cys13-Cys27.

In terms of processing, contains 3 disulfide bonds. Post-translationally, this is a cyclic peptide.

Functionally, probably participates in a plant defense mechanism. The polypeptide is Cyclotide cter-G (Clitoria ternatea (Butterfly pea)).